The chain runs to 455 residues: N-acetyl-S-(2-succino)cysteine lyase (455 aa).

106 to 107 is a binding site for fumarate; the sequence is TT. The active-site Proton donor/acceptor is the His-154. Position 233 (Arg-233) interacts with fumarate. Ser-277 serves as the catalytic Proton donor/acceptor. Residues Ser-278 and 283–285 each bind fumarate; that span reads KRN.

It belongs to the lyase 1 family.

The enzyme catalyses N-acetyl-S-(2-succino)-L-cysteine = N-acetyl-L-cysteine + fumarate. It functions in the pathway amino-acid biosynthesis; L-cysteine biosynthesis. Its function is as follows. Catalyzes the cleavage of N-acetyl-S-(2-succino)cysteine into fumarate and N-acetylcysteine. Is involved in a S-(2-succino)cysteine (2SC) degradation pathway that allows the bacterium to recover cysteine from 2SC and to detoxify 2SC that may be a toxic metabolite. Can also perform the reverse reaction in vitro, and has minor activity against 2SC and other small molecule thiols. The polypeptide is N-acetyl-S-(2-succino)cysteine lyase (Enterococcus italicus (strain DSM 15952 / CCUG 50447 / LMG 22039 / TP 1.5)).